A 942-amino-acid chain; its full sequence is MORC family CW-type zinc finger protein 3 (942 aa).

Glycyl lysine isopeptide (Lys-Gly) (interchain with G-Cter in SUMO2) cross-links involve residues lysine 191, lysine 205, lysine 280, and lysine 293. The tract at residues 326–353 is nuclear matrix binding; that stretch reads AYEKVGCQLKANNMGVGVVGIIECNFLK. The segment at 404-454 adopts a CW-type zinc-finger fold; sequence KRPDQTWVQCDACLKWRKLPDGIDQLPEKWYCSNNPDPQFRNCEVPEEPED. 4 residues coordinate Zn(2+): cysteine 413, cysteine 416, cysteine 435, and cysteine 446. Positions 503–594 are RNA binding; sequence SFSPVKESVP…ENSTPKPAVD (92 aa). Serine 517 and serine 543 each carry phosphoserine. Lysine 558 is covalently cross-linked (Glycyl lysine isopeptide (Lys-Gly) (interchain with G-Cter in SUMO2)). Position 563 is a phosphoserine (serine 563). Lysine 604 is covalently cross-linked (Glycyl lysine isopeptide (Lys-Gly) (interchain with G-Cter in SUMO1); alternate). Lysine 604 participates in a covalent cross-link: Glycyl lysine isopeptide (Lys-Gly) (interchain with G-Cter in SUMO2); alternate. The segment at 623–654 is disordered; that stretch reads PKPCVQASSTSTSTSRSDPGITVSTQTDAPGL. Residues 630-639 are compositionally biased toward low complexity; the sequence is SSTSTSTSRS. Residues lysine 657, lysine 658, and lysine 743 each participate in a glycyl lysine isopeptide (Lys-Gly) (interchain with G-Cter in SUMO1); alternate cross-link. Glycyl lysine isopeptide (Lys-Gly) (interchain with G-Cter in SUMO2); alternate cross-links involve residues lysine 657, lysine 658, and lysine 743. Positions 696–874 form a coiled coil; the sequence is SHQLQELRSE…KSTGQQAAAD (179 aa). At serine 768 the chain carries Phosphoserine. Lysine 797 participates in a covalent cross-link: Glycyl lysine isopeptide (Lys-Gly) (interchain with G-Cter in SUMO1); alternate. Residue lysine 797 forms a Glycyl lysine isopeptide (Lys-Gly) (interchain with G-Cter in SUMO2); alternate linkage.

Homodimer. The sumoylated form interacts with PML (via SUMO-interacting motif). Interacts with TP53. Post-translationally, sumoylation is involved in interaction with PML and localization to PML nuclear bodies.

The protein resides in the nucleus. It localises to the nucleoplasm. Its subcellular location is the nucleus matrix. The protein localises to the PML body. It is found in the chromosome. Dimerization of the ATPase domain is strictly required for the catalytic activity and binding to double-stranded DNA. Disrupting the interface between ATPase and the CW domains releases autoinhibition since the CW domain sterically impedes binding of the ATPase domain to DNA. Nuclear matrix protein which forms MORC3-NBs (nuclear bodies) via an ATP-dependent mechanism and plays a role in innate immunity by restricting different viruses through modulation of the IFN response. Mechanistically, possesses a primary antiviral function through a MORC3-regulated element that activates IFNB1, and this function is guarded by a secondary IFN-repressing function. Sumoylated MORC3-NBs associates with PML-NBs and recruits TP53 and SP100, thus regulating TP53 activity. Binds RNA in vitro. Histone methylation reader which binds to non-methylated (H3K4me0), monomethylated (H3K4me1), dimethylated (H3K4me2) and trimethylated (H3K4me3) 'Lys-4' on histone H3. The order of binding preference is H3K4me3 &gt; H3K4me2 &gt; H3K4me1 &gt; H3K4me0. This Mus musculus (Mouse) protein is MORC family CW-type zinc finger protein 3.